Here is a 114-residue protein sequence, read N- to C-terminus: Nucleoid-associated protein Tlet_0999 (114 aa).

It belongs to the YbaB/EbfC family. As to quaternary structure, homodimer.

Its subcellular location is the cytoplasm. The protein resides in the nucleoid. Functionally, binds to DNA and alters its conformation. May be involved in regulation of gene expression, nucleoid organization and DNA protection. This Pseudothermotoga lettingae (strain ATCC BAA-301 / DSM 14385 / NBRC 107922 / TMO) (Thermotoga lettingae) protein is Nucleoid-associated protein Tlet_0999.